Here is a 358-residue protein sequence, read N- to C-terminus: tRNA (guanine-N(7)-)-methyltransferase (358 aa).

The interval 1 to 29 (MTPPPPKRQKRDEYRKATAEATSQSGASD) is disordered. Residues Gly99 and 122–123 (EI) contribute to the S-adenosyl-L-methionine site. A compositionally biased stretch (low complexity) spans 151–186 (TATAASETPSQQQAQIDGKQANANAAADAASPAPST). The tract at residues 151 to 194 (TATAASETPSQQQAQIDGKQANANAAADAASPAPSTDTEHMPTT) is disordered. S-adenosyl-L-methionine contacts are provided by residues 209 to 210 (NT) and Cys229. Residue Asp232 is part of the active site. Position 330-332 (330-332 (TEE)) interacts with S-adenosyl-L-methionine.

Belongs to the class I-like SAM-binding methyltransferase superfamily. TrmB family. In terms of assembly, forms a complex with trm82.

Its subcellular location is the nucleus. It catalyses the reaction guanosine(46) in tRNA + S-adenosyl-L-methionine = N(7)-methylguanosine(46) in tRNA + S-adenosyl-L-homocysteine. It participates in tRNA modification; N(7)-methylguanine-tRNA biosynthesis. Functionally, catalyzes the formation of N(7)-methylguanine at position 46 (m7G46) in tRNA. The chain is tRNA (guanine-N(7)-)-methyltransferase (trm8) from Aspergillus fumigatus (strain ATCC MYA-4609 / CBS 101355 / FGSC A1100 / Af293) (Neosartorya fumigata).